Here is a 283-residue protein sequence, read N- to C-terminus: tRNA-cytidine(32) 2-sulfurtransferase (283 aa).

The PP-loop motif motif lies at 37–42 (SGGKDS). Residues Cys-112, Cys-115, and Cys-203 each coordinate [4Fe-4S] cluster.

Belongs to the TtcA family. In terms of assembly, homodimer. Requires Mg(2+) as cofactor. The cofactor is [4Fe-4S] cluster.

It localises to the cytoplasm. The enzyme catalyses cytidine(32) in tRNA + S-sulfanyl-L-cysteinyl-[cysteine desulfurase] + AH2 + ATP = 2-thiocytidine(32) in tRNA + L-cysteinyl-[cysteine desulfurase] + A + AMP + diphosphate + H(+). The protein operates within tRNA modification. Functionally, catalyzes the ATP-dependent 2-thiolation of cytidine in position 32 of tRNA, to form 2-thiocytidine (s(2)C32). The sulfur atoms are provided by the cysteine/cysteine desulfurase (IscS) system. This Legionella pneumophila (strain Corby) protein is tRNA-cytidine(32) 2-sulfurtransferase.